Here is a 438-residue protein sequence, read N- to C-terminus: EF-hand calcium-binding domain-containing protein 3 (438 aa).

2 EF-hand domains span residues 47–82 and 83–118; these read SQMR…LGMN and LTKH…KNRF. Residues Asp-96, Asp-98, Asp-100, Lys-102, and Asp-107 each contribute to the Ca(2+) site. Tyr-279 carries the post-translational modification Phosphotyrosine. Residues 413–438 form a disordered region; that stretch reads SSSDISECDTDTGRKRKRKGFKGFRQ. Residues 426-438 are compositionally biased toward basic residues; that stretch reads RKRKRKGFKGFRQ.

The protein is EF-hand calcium-binding domain-containing protein 3 (EFCAB3) of Bos taurus (Bovine).